Consider the following 157-residue polypeptide: Nascent polypeptide-associated complex subunit alpha (157 aa).

One can recognise an NAC-A/B domain in the interval 6–71; it reads TTDESHIHKT…LGSPVNLHQL (66 aa). Residues 81-107 are compositionally biased toward basic and acidic residues; sequence SSKDQEGPGLYDEIHSDPQEDGVKEAE. The tract at residues 81–116 is disordered; it reads SSKDQEGPGLYDEIHSDPQEDGVKEAEEITVDPSDE. Residues 118 to 157 enclose the UBA domain; it reads LSEEDIKLISSQVKASRNDIIKALVESEYDVVDAMMKLTK.

Belongs to the NAC-alpha family.

The protein localises to the cytoplasm. It is found in the nucleus. In terms of biological role, may be involved in mitochondrial protein import by enhancing productive ribosome interactions with the outer mitochondrial membrane and blocks the inappropriate interaction of ribosomes translating non-secretory nascent polypeptides with translocation sites in the membrane of the endoplasmic reticulum. EGD2 may also be involved in transcription regulation. The protein is Nascent polypeptide-associated complex subunit alpha (EGD2) of Encephalitozoon cuniculi (strain GB-M1) (Microsporidian parasite).